Reading from the N-terminus, the 106-residue chain is MGKTNDWLDFDQLAEDKVRDALKPPSMYKVILVNDDYTPMEFVIDVLQKFFSYDVERATQLMLAVHYQGKAICGVFTAEVAETKVAMVNKYARENEHPLLCTLEKA.

It belongs to the ClpS family. Binds to the N-terminal domain of the chaperone ClpA.

In terms of biological role, involved in the modulation of the specificity of the ClpAP-mediated ATP-dependent protein degradation. The protein is ATP-dependent Clp protease adapter protein ClpS of Citrobacter koseri (strain ATCC BAA-895 / CDC 4225-83 / SGSC4696).